Here is a 296-residue protein sequence, read N- to C-terminus: Ribosomal RNA small subunit methyltransferase H (296 aa).

S-adenosyl-L-methionine is bound by residues 30–32, D49, F77, D95, and Q102; that span reads GGH.

The protein belongs to the methyltransferase superfamily. RsmH family.

It localises to the cytoplasm. It catalyses the reaction cytidine(1402) in 16S rRNA + S-adenosyl-L-methionine = N(4)-methylcytidine(1402) in 16S rRNA + S-adenosyl-L-homocysteine + H(+). Functionally, specifically methylates the N4 position of cytidine in position 1402 (C1402) of 16S rRNA. This is Ribosomal RNA small subunit methyltransferase H from Hydrogenobaculum sp. (strain Y04AAS1).